The sequence spans 475 residues: Ribulose bisphosphate carboxylase large chain (475 aa).

Positions 1 to 2 (MS) are excised as a propeptide. Proline 3 is modified (N-acetylproline). At lysine 14 the chain carries N6,N6,N6-trimethyllysine. Asparagine 123 and threonine 173 together coordinate substrate. Residue lysine 175 is the Proton acceptor of the active site. Lysine 177 is a binding site for substrate. Residues lysine 201, aspartate 203, and glutamate 204 each contribute to the Mg(2+) site. Residue lysine 201 is modified to N6-carboxylysine. Histidine 294 serves as the catalytic Proton acceptor. Substrate contacts are provided by arginine 295, histidine 327, and serine 379.

It belongs to the RuBisCO large chain family. Type I subfamily. Heterohexadecamer of 8 large chains and 8 small chains; disulfide-linked. The disulfide link is formed within the large subunit homodimers. Mg(2+) is required as a cofactor. The disulfide bond which can form in the large chain dimeric partners within the hexadecamer appears to be associated with oxidative stress and protein turnover.

It localises to the plastid. Its subcellular location is the chloroplast. It catalyses the reaction 2 (2R)-3-phosphoglycerate + 2 H(+) = D-ribulose 1,5-bisphosphate + CO2 + H2O. The enzyme catalyses D-ribulose 1,5-bisphosphate + O2 = 2-phosphoglycolate + (2R)-3-phosphoglycerate + 2 H(+). In terms of biological role, ruBisCO catalyzes two reactions: the carboxylation of D-ribulose 1,5-bisphosphate, the primary event in carbon dioxide fixation, as well as the oxidative fragmentation of the pentose substrate in the photorespiration process. Both reactions occur simultaneously and in competition at the same active site. This is Ribulose bisphosphate carboxylase large chain from Cedrus deodara (Deodar cedar).